The sequence spans 165 residues: Crossover junction endodeoxyribonuclease RuvC (165 aa).

Residues D7, E66, and D138 contribute to the active site. 3 residues coordinate Mg(2+): D7, E66, and D138.

This sequence belongs to the RuvC family. As to quaternary structure, homodimer which binds Holliday junction (HJ) DNA. The HJ becomes 2-fold symmetrical on binding to RuvC with unstacked arms; it has a different conformation from HJ DNA in complex with RuvA. In the full resolvosome a probable DNA-RuvA(4)-RuvB(12)-RuvC(2) complex forms which resolves the HJ. Mg(2+) serves as cofactor.

The protein localises to the cytoplasm. It catalyses the reaction Endonucleolytic cleavage at a junction such as a reciprocal single-stranded crossover between two homologous DNA duplexes (Holliday junction).. In terms of biological role, the RuvA-RuvB-RuvC complex processes Holliday junction (HJ) DNA during genetic recombination and DNA repair. Endonuclease that resolves HJ intermediates. Cleaves cruciform DNA by making single-stranded nicks across the HJ at symmetrical positions within the homologous arms, yielding a 5'-phosphate and a 3'-hydroxyl group; requires a central core of homology in the junction. The consensus cleavage sequence is 5'-(A/T)TT(C/G)-3'. Cleavage occurs on the 3'-side of the TT dinucleotide at the point of strand exchange. HJ branch migration catalyzed by RuvA-RuvB allows RuvC to scan DNA until it finds its consensus sequence, where it cleaves and resolves the cruciform DNA. In Ruegeria pomeroyi (strain ATCC 700808 / DSM 15171 / DSS-3) (Silicibacter pomeroyi), this protein is Crossover junction endodeoxyribonuclease RuvC.